A 309-amino-acid chain; its full sequence is MSIRIIPQDELGSSEKRTADMIPPLLFPRLKNLYNRRAERLRELAENNPLDDYLRFAALIAHAQEVVLYDHPLEMDLTARIKEASAQGKPPLDIHVLPRDKHWQKLLMALIAELKPEMSGPALAVIENLEKASTQELEDMASALFASDFSSVSSDKAPFIWAALSLYWAQMANLIPGKARAEYGEQRQYCPVCGSMPVSSMVQIGTTQGLRYLHCNLCETEWHVVRVKCSNCEQSGKLHYWSLDDEQAAIKAESCDDCGTYLKILYQEKEPKVEAVADDLASLVLDARMEQEGYARSSINPFLFPGEGE.

Belongs to the FdhE family.

The protein localises to the cytoplasm. Its function is as follows. Necessary for formate dehydrogenase activity. The chain is Protein FdhE from Shigella boydii serotype 18 (strain CDC 3083-94 / BS512).